The chain runs to 509 residues: Maturase K (509 aa).

This sequence belongs to the intron maturase 2 family. MatK subfamily.

It localises to the plastid. The protein localises to the chloroplast. Usually encoded in the trnK tRNA gene intron. Probably assists in splicing its own and other chloroplast group II introns. This is Maturase K from Cicer arietinum (Chickpea).